The sequence spans 70 residues: ATP synthase subunit c (70 aa).

2 helical membrane-spanning segments follow: residues 4-24 (IAAGIALCGSAIGAGIGNGML) and 48-68 (ISMALVEAMPIIVIAMSFVLI).

Belongs to the ATPase C chain family. As to quaternary structure, F-type ATPases have 2 components, F(1) - the catalytic core - and F(0) - the membrane proton channel. F(1) has five subunits: alpha(3), beta(3), gamma(1), delta(1), epsilon(1). F(0) has three main subunits: a(1), b(2) and c(10-14). The alpha and beta chains form an alternating ring which encloses part of the gamma chain. F(1) is attached to F(0) by a central stalk formed by the gamma and epsilon chains, while a peripheral stalk is formed by the delta and b chains.

It localises to the cell membrane. Functionally, f(1)F(0) ATP synthase produces ATP from ADP in the presence of a proton or sodium gradient. F-type ATPases consist of two structural domains, F(1) containing the extramembraneous catalytic core and F(0) containing the membrane proton channel, linked together by a central stalk and a peripheral stalk. During catalysis, ATP synthesis in the catalytic domain of F(1) is coupled via a rotary mechanism of the central stalk subunits to proton translocation. Its function is as follows. Key component of the F(0) channel; it plays a direct role in translocation across the membrane. A homomeric c-ring of between 10-14 subunits forms the central stalk rotor element with the F(1) delta and epsilon subunits. The chain is ATP synthase subunit c from Oenococcus oeni (strain ATCC BAA-331 / PSU-1).